The following is a 652-amino-acid chain: DNA ligase (652 aa).

NAD(+) contacts are provided by residues 29-33 (DSEYD), 78-79 (SL), and E107. The active-site N6-AMP-lysine intermediate is K109. The NAD(+) site is built by R130, E164, K278, and K302. 4 residues coordinate Zn(2+): C395, C398, C413, and C418. Positions 577–652 (VADAALSGLT…VRDEAWLESL (76 aa)) constitute a BRCT domain.

The protein belongs to the NAD-dependent DNA ligase family. LigA subfamily. It depends on Mg(2+) as a cofactor. Mn(2+) is required as a cofactor.

The enzyme catalyses NAD(+) + (deoxyribonucleotide)n-3'-hydroxyl + 5'-phospho-(deoxyribonucleotide)m = (deoxyribonucleotide)n+m + AMP + beta-nicotinamide D-nucleotide.. Functionally, DNA ligase that catalyzes the formation of phosphodiester linkages between 5'-phosphoryl and 3'-hydroxyl groups in double-stranded DNA using NAD as a coenzyme and as the energy source for the reaction. It is essential for DNA replication and repair of damaged DNA. The polypeptide is DNA ligase (Streptococcus pneumoniae (strain Hungary19A-6)).